The sequence spans 154 residues: Large ribosomal subunit protein uL30 (154 aa).

It belongs to the universal ribosomal protein uL30 family. As to quaternary structure, part of the 50S ribosomal subunit.

This is Large ribosomal subunit protein uL30 from Methanococcus maripaludis (strain DSM 14266 / JCM 13030 / NBRC 101832 / S2 / LL).